A 691-amino-acid chain; its full sequence is MEIGISKYRNIGIMAHIDAGKTTTTERILFYTGKQNRIGEVHDGAASMDWMEQEKERGITITSAATTCFWNDHRVNIIDTPGHVDFTIEVERSLRVLDGAVAVFDGVAGVEPQSETVWRQADKYSVPRICFVNKMDRIGANFYRCVDMIKTKLGAAPLVIHLPIGSEKDFKGIIDLISMKAIIWQEETLGAKFSYEDIPSDLLDKAQEYRNLLLDAAAEMDDEAMNTYFESNDLPVDLLKKCVRNGTIKGKFVPVLCGSAFKNKGVQPLLDGVVDFLPSPIDVDVIVGIDPKDSEKKIEVKPSEKEKFVALAFKVMTDKFVGSLTFIRIYSGKLKSKSTVSNALKNETEGIGRMLLMHANNREDITEARAGDIVALVGLKKTTTGDTLCSVDFPILLERMEFPEPVIEIAVEPKTTSDQEKLGIALNRLVAEDPSLRMSVNAESGQTILKGMGELHLEIIVDRMKREFNVEANVGAPQVAYRETITKSVEIDYTHKKQSGGAGQFAKVKIKFEPLEPGSGFQFESKIVGGAIPKEYIPGVENGLELIKEGGIISGFPLIDFKATLLDGAFHEVDSSPLAFELAAKGAFKEMANKAGPKMLEPIMKVEIITPEEYMGDVMGDINSRRGNVADMLDLGNNSKIITASVPLANMFGYINVLRSMSQGRAQYSMHFSCYEQVPQYVVDELKLEYN.

In terms of domain architecture, tr-type G spans 6 to 281 (SKYRNIGIMA…GVVDFLPSPI (276 aa)). GTP is bound by residues 15-22 (AHIDAGKT), 79-83 (DTPGH), and 133-136 (NKMD).

This sequence belongs to the TRAFAC class translation factor GTPase superfamily. Classic translation factor GTPase family. EF-G/EF-2 subfamily.

The protein localises to the cytoplasm. In terms of biological role, catalyzes the GTP-dependent ribosomal translocation step during translation elongation. During this step, the ribosome changes from the pre-translocational (PRE) to the post-translocational (POST) state as the newly formed A-site-bound peptidyl-tRNA and P-site-bound deacylated tRNA move to the P and E sites, respectively. Catalyzes the coordinated movement of the two tRNA molecules, the mRNA and conformational changes in the ribosome. The sequence is that of Elongation factor G from Wolbachia pipientis wMel.